The following is a 199-amino-acid chain: Extracellular superoxide dismutase [Cu-Zn] (199 aa).

Residues methionine 1–threonine 20 form the signal peptide. Asparagine 33, asparagine 60, and asparagine 70 each carry an N-linked (GlcNAc...) asparagine glycan. Cu cation contacts are provided by histidine 89, histidine 91, and histidine 106. Cysteine 100 and cysteine 192 are joined by a disulfide. Histidine 106 is a binding site for Zn(2+). N-linked (GlcNAc...) asparagine glycosylation occurs at asparagine 111. Residues histidine 114, histidine 123, and aspartate 126 each contribute to the Zn(2+) site. A Cu cation-binding site is contributed by histidine 163.

This sequence belongs to the Cu-Zn superoxide dismutase family. In terms of assembly, homodimer. Cu cation serves as cofactor. Zn(2+) is required as a cofactor.

It is found in the secreted. It localises to the extracellular space. It carries out the reaction 2 superoxide + 2 H(+) = H2O2 + O2. In terms of biological role, protect the extracellular space from toxic effect of reactive oxygen intermediates by converting superoxide radicals into hydrogen peroxide and oxygen. May act in the parasite defense by neutralizing superoxide generated by activated leukocytes, thus acting as both an antioxidant and an anti-inflammatory factor. This chain is Extracellular superoxide dismutase [Cu-Zn], found in Brugia pahangi (Filarial nematode worm).